A 650-amino-acid chain; its full sequence is Chaperone protein HtpG (650 aa).

The segment at 1 to 349 (MTKTTKKFET…SSDLPLNVSR (349 aa)) is a; substrate-binding. A b region spans residues 350-566 (EILQEDVQIK…EHGLNANMER (217 aa)). The tract at residues 567-650 (ILRAMNQDVP…VADGKAAAGE (84 aa)) is c.

This sequence belongs to the heat shock protein 90 family. Homodimer.

It is found in the cytoplasm. Molecular chaperone. Has ATPase activity. The protein is Chaperone protein HtpG of Geobacter metallireducens (strain ATCC 53774 / DSM 7210 / GS-15).